Consider the following 399-residue polypeptide: Probable aspartate/prephenate aminotransferase (399 aa).

L-aspartate contacts are provided by glycine 39, tryptophan 125, and asparagine 175. Position 239 is an N6-(pyridoxal phosphate)lysine (lysine 239). Arginine 375 provides a ligand contact to L-aspartate.

This sequence belongs to the class-I pyridoxal-phosphate-dependent aminotransferase family. In terms of assembly, homodimer. Pyridoxal 5'-phosphate serves as cofactor.

It localises to the cytoplasm. The catalysed reaction is L-aspartate + 2-oxoglutarate = oxaloacetate + L-glutamate. It carries out the reaction L-arogenate + 2-oxoglutarate = prephenate + L-glutamate. In terms of biological role, catalyzes the reversible conversion of aspartate and 2-oxoglutarate to glutamate and oxaloacetate. Can also transaminate prephenate in the presence of glutamate. The chain is Probable aspartate/prephenate aminotransferase (aatA) from Rickettsia prowazekii (strain Madrid E).